The chain runs to 309 residues: NADH-quinone oxidoreductase subunit C (309 aa).

The disordered stretch occupies residues 198–309; that stretch reads LPGDEKAVPP…RTRKKKEDGE (112 aa). The segment covering 220 to 230 has biased composition (basic and acidic residues); that stretch reads TKGDAKADVPK. Low complexity predominate over residues 246-261; it reads DAAAKPVAEAAAPAAT.

It belongs to the complex I 30 kDa subunit family. In terms of assembly, NDH-1 is composed of 14 different subunits. Subunits NuoB, C, D, E, F, and G constitute the peripheral sector of the complex.

It localises to the cell inner membrane. The enzyme catalyses a quinone + NADH + 5 H(+)(in) = a quinol + NAD(+) + 4 H(+)(out). In terms of biological role, NDH-1 shuttles electrons from NADH, via FMN and iron-sulfur (Fe-S) centers, to quinones in the respiratory chain. The immediate electron acceptor for the enzyme in this species is believed to be ubiquinone. Couples the redox reaction to proton translocation (for every two electrons transferred, four hydrogen ions are translocated across the cytoplasmic membrane), and thus conserves the redox energy in a proton gradient. This chain is NADH-quinone oxidoreductase subunit C, found in Novosphingobium aromaticivorans (strain ATCC 700278 / DSM 12444 / CCUG 56034 / CIP 105152 / NBRC 16084 / F199).